The chain runs to 291 residues: ATP synthase gamma chain (291 aa).

Belongs to the ATPase gamma chain family. In terms of assembly, F-type ATPases have 2 components, CF(1) - the catalytic core - and CF(0) - the membrane proton channel. CF(1) has five subunits: alpha(3), beta(3), gamma(1), delta(1), epsilon(1). CF(0) has three main subunits: a, b and c.

The protein resides in the cell inner membrane. Its function is as follows. Produces ATP from ADP in the presence of a proton gradient across the membrane. The gamma chain is believed to be important in regulating ATPase activity and the flow of protons through the CF(0) complex. The chain is ATP synthase gamma chain from Rhodopseudomonas palustris (strain ATCC BAA-98 / CGA009).